The sequence spans 112 residues: Cuticle protein AM1239 (112 aa).

Positions 16-85 (DGNFNYRFET…FIPTDHPLPA (70 aa)) constitute a Chitin-binding type R&amp;R domain. Thr-79 carries an O-linked (HexNAc) threonine glycan.

Arthrodial membrane.

This Cancer pagurus (Rock crab) protein is Cuticle protein AM1239.